The following is a 264-amino-acid chain: 3-methyl-2-oxobutanoate hydroxymethyltransferase (264 aa).

Asp-45 and Asp-84 together coordinate Mg(2+). 3-methyl-2-oxobutanoate contacts are provided by residues 45–46 (DS), Asp-84, and Lys-112. Glu-114 serves as a coordination point for Mg(2+). Glu-181 (proton acceptor) is an active-site residue.

This sequence belongs to the PanB family. Homodecamer; pentamer of dimers. Mg(2+) serves as cofactor.

It is found in the cytoplasm. It carries out the reaction 3-methyl-2-oxobutanoate + (6R)-5,10-methylene-5,6,7,8-tetrahydrofolate + H2O = 2-dehydropantoate + (6S)-5,6,7,8-tetrahydrofolate. The protein operates within cofactor biosynthesis; (R)-pantothenate biosynthesis; (R)-pantoate from 3-methyl-2-oxobutanoate: step 1/2. Functionally, catalyzes the reversible reaction in which hydroxymethyl group from 5,10-methylenetetrahydrofolate is transferred onto alpha-ketoisovalerate to form ketopantoate. This is 3-methyl-2-oxobutanoate hydroxymethyltransferase from Shewanella sp. (strain MR-4).